Reading from the N-terminus, the 147-residue chain is Two-component response regulator ORR11 (147 aa).

Positions 29-146 (HVLAVDDSSV…DVSRLFSRVL (118 aa)) constitute a Response regulatory domain. Asp79 carries the post-translational modification 4-aspartylphosphate.

This sequence belongs to the ARR family. Type-A subfamily. In terms of processing, two-component system major event consists of a His-to-Asp phosphorelay between a sensor histidine kinase (HK) and a response regulator (RR). In plants, the His-to-Asp phosphorelay involves an additional intermediate named Histidine-containing phosphotransfer protein (HPt). This multistep phosphorelay consists of a His-Asp-His-Asp sequential transfer of a phosphate group between first a His and an Asp of the HK protein, followed by the transfer to a conserved His of the HPt protein and finally the transfer to an Asp in the receiver domain of the RR protein.

Its function is as follows. Functions as a response regulator involved in His-to-Asp phosphorelay signal transduction system. Phosphorylation of the Asp residue in the receiver domain activates the ability of the protein to promote the transcription of target genes. Type-A response regulators seem to act as negative regulators of the cytokinin signaling. The chain is Two-component response regulator ORR11 from Oryza sativa subsp. indica (Rice).